A 1098-amino-acid polypeptide reads, in one-letter code: Contactin-5 (1098 aa).

A signal peptide spans 1 to 23 (MASCWRLILFLSVTRWLSDYSEA). 6 Ig-like C2-type domains span residues 98–189 (PVFV…ATLQ), 195–281 (NFSG…RVLS), 299–384 (PKIE…GQLQ), 389–473 (PHWV…AELK), 479–568 (PSFE…LSVK), and 570–659 (PTRI…DSVS). Cys122 and Cys172 are disulfide-bonded. N-linked (GlcNAc...) asparagine glycans are attached at residues Asn137 and Asn195. Disulfide bonds link Cys216–Cys268 and Cys321–Cys368. 3 N-linked (GlcNAc...) asparagine glycosylation sites follow: Asn396, Asn448, and Asn539. 3 disulfide bridges follow: Cys410/Cys457, Cys502/Cys550, and Cys592/Cys649. Fibronectin type-III domains follow at residues 672–770 (PPGV…TNEA), 775–872 (APSN…SAEG), 877–971 (APTD…TKRH), and 976–1066 (PPGN…SYSG). Asn778, Asn815, and Asn930 each carry an N-linked (GlcNAc...) asparagine glycan. The tract at residues 956-982 (GYGPPSREASTTTKRHPPREPPGNLRW) is disordered. Asn1001 carries N-linked (GlcNAc...) asparagine glycosylation. The GPI-anchor amidated serine moiety is linked to residue Ser1071. Positions 1072–1098 (AQSTLHSLSKWSSVTLLLALMLPSSSW) are cleaved as a propeptide — removed in mature form.

It belongs to the immunoglobulin superfamily. Contactin family. In terms of assembly, interacts with PTPRG. Expressed in the nervous system. Preferentially expressed in the central auditory pathways.

It is found in the cell membrane. Contactins mediate cell surface interactions during nervous system development. Has some neurite outgrowth-promoting activity in the cerebral cortical neurons but not in hippocampal neurons. Involved in neuronal activity in the auditory system. In Mus musculus (Mouse), this protein is Contactin-5 (Cntn5).